The chain runs to 106 residues: Thiosulfate sulfurtransferase GlpE (106 aa).

The Rhodanese domain maps to 17–105; the sequence is EQGEAKLVDI…WQRAQLPIVR (89 aa). Cysteine 65 (cysteine persulfide intermediate) is an active-site residue.

The protein belongs to the GlpE family.

The protein localises to the cytoplasm. It catalyses the reaction thiosulfate + hydrogen cyanide = thiocyanate + sulfite + 2 H(+). The catalysed reaction is thiosulfate + [thioredoxin]-dithiol = [thioredoxin]-disulfide + hydrogen sulfide + sulfite + 2 H(+). Transferase that catalyzes the transfer of sulfur from thiosulfate to thiophilic acceptors such as cyanide or dithiols. May function in a CysM-independent thiosulfate assimilation pathway by catalyzing the conversion of thiosulfate to sulfite, which can then be used for L-cysteine biosynthesis. The chain is Thiosulfate sulfurtransferase GlpE from Vibrio parahaemolyticus serotype O3:K6 (strain RIMD 2210633).